The chain runs to 196 residues: ATP-dependent Clp protease proteolytic subunit (196 aa).

Catalysis depends on S98, which acts as the Nucleophile. H123 is an active-site residue.

Belongs to the peptidase S14 family. Fourteen ClpP subunits assemble into 2 heptameric rings which stack back to back to give a disk-like structure with a central cavity, resembling the structure of eukaryotic proteasomes.

It is found in the cytoplasm. It carries out the reaction Hydrolysis of proteins to small peptides in the presence of ATP and magnesium. alpha-casein is the usual test substrate. In the absence of ATP, only oligopeptides shorter than five residues are hydrolyzed (such as succinyl-Leu-Tyr-|-NHMec, and Leu-Tyr-Leu-|-Tyr-Trp, in which cleavage of the -Tyr-|-Leu- and -Tyr-|-Trp bonds also occurs).. In terms of biological role, cleaves peptides in various proteins in a process that requires ATP hydrolysis. Has a chymotrypsin-like activity. Plays a major role in the degradation of misfolded proteins. In Acidobacterium capsulatum (strain ATCC 51196 / DSM 11244 / BCRC 80197 / JCM 7670 / NBRC 15755 / NCIMB 13165 / 161), this protein is ATP-dependent Clp protease proteolytic subunit.